Here is a 153-residue protein sequence, read N- to C-terminus: ATP synthase subunit b' (153 aa).

The chain crosses the membrane as a helical span at residues 23–40 (LMAIQVVALTYILNSLFF).

This sequence belongs to the ATPase B chain family. F-type ATPases have 2 components, F(1) - the catalytic core - and F(0) - the membrane proton channel. F(1) has five subunits: alpha(3), beta(3), gamma(1), delta(1), epsilon(1). F(0) has four main subunits: a(1), b(1), b'(1) and c(10-14). The alpha and beta chains form an alternating ring which encloses part of the gamma chain. F(1) is attached to F(0) by a central stalk formed by the gamma and epsilon chains, while a peripheral stalk is formed by the delta, b and b' chains.

It is found in the cellular thylakoid membrane. Its function is as follows. F(1)F(0) ATP synthase produces ATP from ADP in the presence of a proton or sodium gradient. F-type ATPases consist of two structural domains, F(1) containing the extramembraneous catalytic core and F(0) containing the membrane proton channel, linked together by a central stalk and a peripheral stalk. During catalysis, ATP synthesis in the catalytic domain of F(1) is coupled via a rotary mechanism of the central stalk subunits to proton translocation. In terms of biological role, component of the F(0) channel, it forms part of the peripheral stalk, linking F(1) to F(0). The b'-subunit is a diverged and duplicated form of b found in plants and photosynthetic bacteria. The protein is ATP synthase subunit b' of Prochlorococcus marinus (strain MIT 9312).